The following is a 168-amino-acid chain: Zinc-finger homeodomain protein 14 (168 aa).

Residues 7-51 (YRECMRNHAAKLGSYAIDGCREYSQPSTGDLCVACGCHRSYHRRI) form a ZF-HD dimerization-type; degenerate zinc finger. Positions 76-103 (ARLKWKTAEERNEEEEDDTEETSTEEKM) form a coiled coil. Positions 82-112 (TAEERNEEEEDDTEETSTEEKMTVQRRRKSK) are disordered. Residues 86–98 (RNEEEEDDTEETS) show a composition bias toward acidic residues. Residues 106–168 (QRRRKSKFTA…WVNNNKKFYH (63 aa)) constitute a DNA-binding region (homeobox).

In terms of assembly, homo- and heterodimer with other ZFHD proteins. Interacts with ZHD11. As to expression, mostly expressed in flowers and stems.

The protein localises to the nucleus. Functionally, putative transcription factor. This chain is Zinc-finger homeodomain protein 14 (ZHD14), found in Arabidopsis thaliana (Mouse-ear cress).